Here is a 457-residue protein sequence, read N- to C-terminus: Argininosuccinate lyase (457 aa).

The protein belongs to the lyase 1 family. Argininosuccinate lyase subfamily.

The protein localises to the cytoplasm. It carries out the reaction 2-(N(omega)-L-arginino)succinate = fumarate + L-arginine. It functions in the pathway amino-acid biosynthesis; L-arginine biosynthesis; L-arginine from L-ornithine and carbamoyl phosphate: step 3/3. This chain is Argininosuccinate lyase, found in Cronobacter sakazakii (strain ATCC BAA-894) (Enterobacter sakazakii).